The following is a 1783-amino-acid chain: Chitin synthase A (1783 aa).

Residues Asn159, Asn637, Asn652, Asn664, and Asn669 are each glycosylated (N-linked (GlcNAc...) asparagine). Transmembrane regions (helical) follow at residues 745–765 (IWVAIVWFWTFWIPSPLLSFV) and 781–801 (LTLVWFIVLINAAIVFWIVAF). 2 N-linked (GlcNAc...) asparagine glycosylation sites follow: Asn1014 and Asn1018. Residues 1051–1071 (IMLAMTIILCSVILVKFLAAL) form a helical membrane-spanning segment. N-linked (GlcNAc...) asparagine glycosylation occurs at Asn1416. The next 3 helical transmembrane spans lie at 1441-1461 (FVVFIDLFGTIILPATTIYLG), 1474-1494 (FPIISIIMLAAVYGLQALIFI), and 1502-1522 (IGWMIIYIMAFPIYSFALPIY). Asn1529 and Asn1617 each carry an N-linked (GlcNAc...) asparagine glycan. A disordered region spans residues 1659–1724 (THDINRGQTP…SFDFQRGNMQ (66 aa)). Residues 1664–1688 (RGQTPFQDFPSSRPSVSNLRGQANP) show a composition bias toward polar residues. An N-linked (GlcNAc...) asparagine glycan is attached at Asn1695. In terms of domain architecture, DEK-C spans 1725–1781 (GPDDSMIIEAIQGVLREVDLDTVTKKQVRALVEQRLQTGLVGERRTFMDRQIDNELA).

This sequence belongs to the chitin synthase family. Class V subfamily.

The protein localises to the cell membrane. It carries out the reaction [(1-&gt;4)-N-acetyl-beta-D-glucosaminyl](n) + UDP-N-acetyl-alpha-D-glucosamine = [(1-&gt;4)-N-acetyl-beta-D-glucosaminyl](n+1) + UDP + H(+). Polymerizes chitin, a structural polymer of the cell wall and septum, by transferring the sugar moiety of UDP-GlcNAc to the non-reducing end of the growing chitin polymer. Responsible for about 29% of the chitin in conidial walls, is essential for conidial wall strength in media with high water potential and contributes to strength of hyphal tips. In Colletotrichum graminicola (Maize anthracnose fungus), this protein is Chitin synthase A.